We begin with the raw amino-acid sequence, 335 residues long: Large ribosomal subunit protein uL10 (335 aa).

The segment at 306-335 is disordered; it reads VEETVEEEEEEEEEEDAEEEAAAGLGALFG. The span at 308–326 shows a compositional bias: acidic residues; sequence ETVEEEEEEEEEEDAEEEA.

The protein belongs to the universal ribosomal protein uL10 family. Part of the 50S ribosomal subunit. Forms part of the ribosomal stalk which helps the ribosome interact with GTP-bound translation factors. Forms a heptameric L10(L12)2(L12)2(L12)2 complex, where L10 forms an elongated spine to which the L12 dimers bind in a sequential fashion.

Functionally, forms part of the ribosomal stalk, playing a central role in the interaction of the ribosome with GTP-bound translation factors. The protein is Large ribosomal subunit protein uL10 of Methanobrevibacter smithii (strain ATCC 35061 / DSM 861 / OCM 144 / PS).